The primary structure comprises 413 residues: Aspartate aminotransferase, cytoplasmic (413 aa).

L-aspartate-binding residues include G39 and W141. The residue at position 149 (S149) is a Phosphoserine. L-aspartate is bound at residue N195. K259 is subject to N6-(pyridoxal phosphate)lysine. Position 387 (R387) interacts with L-aspartate.

The protein belongs to the class-I pyridoxal-phosphate-dependent aminotransferase family. In terms of assembly, homodimer. Pyridoxal 5'-phosphate serves as cofactor.

It is found in the cytoplasm. It catalyses the reaction L-aspartate + 2-oxoglutarate = oxaloacetate + L-glutamate. The catalysed reaction is L-cysteine + 2-oxoglutarate = 2-oxo-3-sulfanylpropanoate + L-glutamate. It carries out the reaction (2S)-2-aminobutanoate + 2-oxoglutarate = 2-oxobutanoate + L-glutamate. The enzyme catalyses 3-sulfino-L-alanine + 2-oxoglutarate = 3-sulfinopyruvate + L-glutamate. Biosynthesis of L-glutamate from L-aspartate or L-cysteine. Important regulator of levels of glutamate, the major excitatory neurotransmitter of the vertebrate central nervous system. Acts as a scavenger of glutamate in brain neuroprotection. The aspartate aminotransferase activity is involved in hepatic glucose synthesis during development and in adipocyte glyceroneogenesis. Using L-cysteine as substrate, regulates levels of mercaptopyruvate, an important source of hydrogen sulfide. Mercaptopyruvate is converted into H(2)S via the action of 3-mercaptopyruvate sulfurtransferase (3MST). Hydrogen sulfide is an important synaptic modulator and neuroprotectant in the brain. The polypeptide is Aspartate aminotransferase, cytoplasmic (Pan troglodytes (Chimpanzee)).